A 455-amino-acid polypeptide reads, in one-letter code: Phosphoglycerate kinase, glycosomal (455 aa).

Residues V23, D24, F25, N26, R39, S61, H62, G64, R65, R132, H168, and R169 each contribute to the (2R)-3-phosphoglycerate site. ADP contacts are provided by G214 and A215. A CDP-binding site is contributed by G214. AMP-binding residues include A215 and K216. A215 is a binding site for ATP. A215 is a binding site for Mg(2+). K216 contacts (2R)-3-phosphoglycerate. Residue D219 coordinates CDP. Residue D219 participates in Mg(2+) binding. Positions 220 and 238 each coordinate ADP. K220 contacts AMP. Residue K220 participates in ATP binding. G238 lines the CDP pocket. Residues A239 and A311 each contribute to the AMP site. 2 residues coordinate ATP: A239 and A311. Residues A311 and N335 each contribute to the ADP site. Residues G336 and F341 each coordinate CDP. ADP is bound by residues F341, E342, D374, and T375. An AMP-binding site is contributed by E342. ATP-binding residues include E342, D374, and T375. D374 contributes to the Mg(2+) binding site. Residues 417–455 (DAKAPAAAAAAGGDCPCGSGCAAVPAAATATVSMVLASP) form a topogenic signal region.

It belongs to the phosphoglycerate kinase family. In terms of assembly, monomer. Mg(2+) serves as cofactor.

Its subcellular location is the glycosome. The enzyme catalyses (2R)-3-phosphoglycerate + ATP = (2R)-3-phospho-glyceroyl phosphate + ADP. It participates in carbohydrate degradation; glycolysis; pyruvate from D-glyceraldehyde 3-phosphate: step 2/5. This Crithidia fasciculata protein is Phosphoglycerate kinase, glycosomal (PGKC).